The primary structure comprises 342 residues: Autoinducer 2 import system permease protein LsrC (342 aa).

Residues 1–13 (MLKFIQNNREITA) are Periplasmic-facing. A helical transmembrane segment spans residues 14 to 34 (LLAVVLLFVLPGFLDRQYLSV). The Cytoplasmic portion of the chain corresponds to 35-38 (QTLT). The helical transmembrane segment at 39–59 (MVYSSAQILILLAMGATLVML) threads the bilayer. The Periplasmic portion of the chain corresponds to 60–69 (TRNIDVSVGS). Residues 70–90 (ITGMCAVLLGMLLNAGYSLPV) form a helical membrane-spanning segment. Residues 91–92 (AC) are Cytoplasmic-facing. The chain crosses the membrane as a helical span at residues 93–113 (VATLLLGLLAGFFNGVLVAWL). A topological domain (periplasmic) is located at residue K114. The helical transmembrane segment at 115–135 (IPAIVATLGTLGLYRGIMLLW) threads the bilayer. Over 136–154 (TGGKWIEGLPAELKQLSAP) the chain is Cytoplasmic. Residues 155–175 (LLFGVSAIGWLTIILVAFMAW) form a helical membrane-spanning segment. Residues 176–212 (LLAKTAFGRSFYVTGDNLQGARQLGVRTEAIRIVAFS) are Periplasmic-facing. Residues 213–233 (LNGCMAALAGIVFASQIGFIP) form a helical membrane-spanning segment. The Cytoplasmic portion of the chain corresponds to 234–251 (NQTGTGLEMKAIAACVLG). A helical transmembrane segment spans residues 252-272 (GISLLGGSGAIIGAVLGAWFL). Residues 273 to 283 (TQIDSVLVLLR) are Periplasmic-facing. A helical membrane pass occupies residues 284-304 (IPAWWNDFIAGMVLLAVLVFD). Over 305 to 342 (GRLRCALERNLRRQKYARFMMPPPPVKPASSGKKREAA) the chain is Cytoplasmic.

This sequence belongs to the binding-protein-dependent transport system permease family. AraH/RbsC subfamily. The complex is composed of two ATP-binding proteins (LsrA), two transmembrane proteins (LsrC and LsrD) and a solute-binding protein (LsrB).

It is found in the cell inner membrane. In terms of biological role, part of the ABC transporter complex LsrABCD involved in autoinducer 2 (AI-2) import. Probably responsible for the translocation of the substrate across the membrane. This Escherichia coli (strain SMS-3-5 / SECEC) protein is Autoinducer 2 import system permease protein LsrC (lsrC).